A 560-amino-acid chain; its full sequence is MLRNGQNQAQLLARSLGQLARGMASSKRVSSKKEDLKPKLPKPPTVEIPMEEPLNASYLSKTLGSSYRSWAAALEKHPELKTLKRKDLLSSYDTLKSLDYSVDDIIAKPMIIYYGATTLANRHSVLQECGFHNVTVQTLAKYVTVVNKPIEVLKAHNYIPFDVKVAERLAGYFKDIKLPVDLRELESETLTLKSLRQSLINAYLRERLQMDDNDLQKLWRVYTRIRHKSFRAVQDTIELLTKEFNFSAERLRKNSFLLYSEADNVRRILREVPTIDSQDIREIGFRRPKILMSTCDSLKQTLQHVHAFGISEDAVLRCLEVLTLGPDTVLERLRDLQEIEEFQVLGTNPRILRLVHYQNKARLRLDYLNQLRVRCASLHILSCGSEAFAKFARDGSDRTKGRDIVVYLSNVLGKDVQVLRNLLSRHPNWCHIPLLHVKQCLEYLRSKKFKLNEIFANIHLLLYPIKRIEEKMLLLQSPDAQEDLQLPVANFDSLSNNEILTLILYLIESEFHFTGDGIWTEQHTHHVENFNNLLPDFPESLNKVYKYGVKPAEKMIMERL.

A mitochondrion-targeting transit peptide spans 1–23 (MLRNGQNQAQLLARSLGQLARGM). The interval 23-47 (MASSKRVSSKKEDLKPKLPKPPTVE) is disordered.

Belongs to the mTERF family. In terms of assembly, probably binds to the mTTF-DNA complex.

The protein resides in the mitochondrion. Binds promoter DNA and regulates initiation of transcription. Regulates mitochondrial replication and transcription. Required for normal topology and maintenance of mitochondrial DNA (mtDNA) levels. Regulates mtDNA replication by re-activating replication after replication pausing. Likely to regulate replication pausing by coordinating with the mitochondrial termination factor mTTF which promotes replication pausing. Their function in replication pausing prevents unregulated replication that may occur for example by collisions between the machineries of DNA replication and transcription during mtDNA synthesis. This ensures the incorporation of RNA transcripts into replication intermediates at the replication fork and allows for proper fork progression. Possibly functions downstream of Dref which activates genes involved in mtDNA replication and maintenance. In Drosophila melanogaster (Fruit fly), this protein is Transcription termination factor 5, mitochondrial.